The primary structure comprises 1205 residues: Bromodomain and PHD finger-containing protein 3 (1205 aa).

Disordered regions lie at residues 1 to 27 and 75 to 121; these read MRKP…KCSP and NSNK…SFRM. Position 17 is a phosphoserine (Ser17). Positions 75 to 84 are enriched in polar residues; it reads NSNKENSEQP. Basic residues predominate over residues 89-99; sequence KSKKPSSKGKK. The PHD-type 1 zinc-finger motif lies at 212-262; the sequence is DAFCCVCLDDECHNSNVILFCDICNLAVHQECYGVPYIPEGQWLCRCCLQS. The C2HC pre-PHD-type zinc finger occupies 266 to 299; the sequence is PVDCILCPNKGGAFKQTSDGHWAHVVCAIWIPEV. The segment at 323–387 adopts a PHD-type 2 zinc-finger fold; that stretch reads LTCYICKQKG…RKTAYCEAHS (65 aa). The disordered stretch occupies residues 387–472; it reads SPPGAATARR…AGQDTPSTLP (86 aa). Residues Ser400 and Ser403 each carry the phosphoserine modification. The segment covering 417-432 has biased composition (acidic residues); that stretch reads DGEEEEEEEVEEEEQE. Residues 444–456 show a composition bias toward basic residues; that stretch reads VPKKSKMSLKQKI. Residues Lys447, Lys449, and Lys671 each carry the N6-acetyllysine modification. Positions 589–693 constitute a Bromo domain; it reads LELMPFNVLL…DLGGAILRHA (105 aa). Ser713 and Ser740 each carry phosphoserine. The tract at residues 779–897 is disordered; it reads RQKLAQPPPP…LQLGNEPLQR (119 aa). Residues 817-827 show a composition bias toward acidic residues; that stretch reads LQEEPEDDGDR. Low complexity predominate over residues 839 to 851; it reads EPTGPAPSLSEQE. Ser900 carries the phosphoserine modification. Disordered regions lie at residues 907 to 926 and 931 to 1015; these read LSLM…VGRR and FKKA…SECS. The segment covering 942–955 has biased composition (basic and acidic residues); the sequence is RSPDRVLENGEDHG. Residues Ser962 and Ser965 each carry the phosphoserine modification. Basic and acidic residues predominate over residues 980 to 991; that stretch reads SCSESEGERSPQ. One can recognise a PWWP domain in the interval 1076–1159; sequence PLELVWAKCR…RDKVLPLGVE (84 aa).

In terms of assembly, component of some HBO1 complex composed of KAT7/HBO1, MEAF6, ING4 or ING5, and BRPF3. Component of the MOZ/MORF complex composed at least of ING5, KAT6A, KAT6B, MEAF6 and one of BRPF1, BRD1/BRPF2 and BRPF3. Interacts with KAT7/HBO1; the interaction is direct.

The protein localises to the nucleus. Scaffold subunit of various histone acetyltransferase (HAT) complexes, such as the MOZ/MORF and HBO1 complexes, which have a histone H3 acetyltransferase activity. Plays a role in DNA replication initiation by directing KAT7/HBO1 specificity towards histone H3 'Lys-14' acetylation (H3K14ac), thereby facilitating the activation of replication origins. Component of the MOZ/MORF complex which has a histone H3 acetyltransferase activity. This chain is Bromodomain and PHD finger-containing protein 3, found in Homo sapiens (Human).